Consider the following 438-residue polypeptide: Glutamyl-tRNA(Gln) amidotransferase subunit D (438 aa).

Residues 92–422 (PTITILGTGG…REAKKMMLTN (331 aa)) enclose the Asparaginase/glutaminase domain. Catalysis depends on residues Thr-102, Thr-178, Asp-179, and Lys-256.

It belongs to the asparaginase 1 family. GatD subfamily. As to quaternary structure, heterodimer of GatD and GatE.

The catalysed reaction is L-glutamyl-tRNA(Gln) + L-glutamine + ATP + H2O = L-glutaminyl-tRNA(Gln) + L-glutamate + ADP + phosphate + H(+). Allows the formation of correctly charged Gln-tRNA(Gln) through the transamidation of misacylated Glu-tRNA(Gln) in organisms which lack glutaminyl-tRNA synthetase. The reaction takes place in the presence of glutamine and ATP through an activated gamma-phospho-Glu-tRNA(Gln). The GatDE system is specific for glutamate and does not act on aspartate. This Pyrococcus furiosus (strain ATCC 43587 / DSM 3638 / JCM 8422 / Vc1) protein is Glutamyl-tRNA(Gln) amidotransferase subunit D.